Here is a 205-residue protein sequence, read N- to C-terminus: MIGKLKGVIDEIAEDHAVIDVHGVGYVAFCSARTLGNLGGVGEAAILFIETYVREDMIRLYGFANQLEREWFRLLQNVQGVGAKVALAVLGTLSPSELANAIALRDIAMVSRAPGVGKKVAERIVTELKNKAPAFAGDASGTIGLKQELGAGAAPAPVADAVSALSNLGYSRDQAANAVAAALKEAGENADSAKLIRLGLKELSR.

Residues 1–64 form a domain I region; that stretch reads MIGKLKGVID…EDMIRLYGFA (64 aa). A domain II region spans residues 65 to 143; that stretch reads NQLEREWFRL…AFAGDASGTI (79 aa). The interval 144–152 is flexible linker; that stretch reads GLKQELGAG. The domain III stretch occupies residues 153-205; the sequence is AAPAPVADAVSALSNLGYSRDQAANAVAAALKEAGENADSAKLIRLGLKELSR.

It belongs to the RuvA family. In terms of assembly, homotetramer. Forms an RuvA(8)-RuvB(12)-Holliday junction (HJ) complex. HJ DNA is sandwiched between 2 RuvA tetramers; dsDNA enters through RuvA and exits via RuvB. An RuvB hexamer assembles on each DNA strand where it exits the tetramer. Each RuvB hexamer is contacted by two RuvA subunits (via domain III) on 2 adjacent RuvB subunits; this complex drives branch migration. In the full resolvosome a probable DNA-RuvA(4)-RuvB(12)-RuvC(2) complex forms which resolves the HJ.

The protein localises to the cytoplasm. Its function is as follows. The RuvA-RuvB-RuvC complex processes Holliday junction (HJ) DNA during genetic recombination and DNA repair, while the RuvA-RuvB complex plays an important role in the rescue of blocked DNA replication forks via replication fork reversal (RFR). RuvA specifically binds to HJ cruciform DNA, conferring on it an open structure. The RuvB hexamer acts as an ATP-dependent pump, pulling dsDNA into and through the RuvAB complex. HJ branch migration allows RuvC to scan DNA until it finds its consensus sequence, where it cleaves and resolves the cruciform DNA. The protein is Holliday junction branch migration complex subunit RuvA of Brucella anthropi (strain ATCC 49188 / DSM 6882 / CCUG 24695 / JCM 21032 / LMG 3331 / NBRC 15819 / NCTC 12168 / Alc 37) (Ochrobactrum anthropi).